The following is a 218-amino-acid chain: MSDNDELQQIAHLRREYTKGGLRRRDLPADPLTLFERWLSQACEAKLADPTAMVVATVDENGQPYQRIVLLKHYDEKGMVFYTNLGSRKAHQIESNPRVSLLFPWHTLERQVMVTGKAERLSTLEVVKYFHSRPRDSQIGAWVSKQSSRISARGILESKFLELKQKFQQGEVPLPSFWGGFRVSMEQIEFWQGGEHRLHDRFLYQRENDAWKIDRLAP.

Residues 14 to 17 (RREY) and Lys-72 contribute to the substrate site. Residues 67–72 (RIVLLK), 82–83 (YT), Arg-88, Lys-89, and Gln-111 each bind FMN. Positions 129, 133, and 137 each coordinate substrate. FMN is bound by residues 146–147 (QS) and Trp-191. 197-199 (RLH) contributes to the substrate binding site. Arg-201 lines the FMN pocket.

The protein belongs to the pyridoxamine 5'-phosphate oxidase family. As to quaternary structure, homodimer. Requires FMN as cofactor.

The catalysed reaction is pyridoxamine 5'-phosphate + O2 + H2O = pyridoxal 5'-phosphate + H2O2 + NH4(+). It catalyses the reaction pyridoxine 5'-phosphate + O2 = pyridoxal 5'-phosphate + H2O2. Its pathway is cofactor metabolism; pyridoxal 5'-phosphate salvage; pyridoxal 5'-phosphate from pyridoxamine 5'-phosphate: step 1/1. The protein operates within cofactor metabolism; pyridoxal 5'-phosphate salvage; pyridoxal 5'-phosphate from pyridoxine 5'-phosphate: step 1/1. Functionally, catalyzes the oxidation of either pyridoxine 5'-phosphate (PNP) or pyridoxamine 5'-phosphate (PMP) into pyridoxal 5'-phosphate (PLP). This chain is Pyridoxine/pyridoxamine 5'-phosphate oxidase, found in Escherichia fergusonii (strain ATCC 35469 / DSM 13698 / CCUG 18766 / IAM 14443 / JCM 21226 / LMG 7866 / NBRC 102419 / NCTC 12128 / CDC 0568-73).